The chain runs to 108 residues: UPF0060 membrane protein Nwi_1459 (108 aa).

4 consecutive transmembrane segments (helical) span residues A5 to L25, V31 to V51, A61 to I81, and L88 to I108.

Belongs to the UPF0060 family.

It localises to the cell inner membrane. The protein is UPF0060 membrane protein Nwi_1459 of Nitrobacter winogradskyi (strain ATCC 25391 / DSM 10237 / CIP 104748 / NCIMB 11846 / Nb-255).